A 344-amino-acid chain; its full sequence is Phosphate acyltransferase (344 aa).

It belongs to the PlsX family. Homodimer. Probably interacts with PlsY.

It localises to the cytoplasm. It catalyses the reaction a fatty acyl-[ACP] + phosphate = an acyl phosphate + holo-[ACP]. It participates in lipid metabolism; phospholipid metabolism. Functionally, catalyzes the reversible formation of acyl-phosphate (acyl-PO(4)) from acyl-[acyl-carrier-protein] (acyl-ACP). This enzyme utilizes acyl-ACP as fatty acyl donor, but not acyl-CoA. The chain is Phosphate acyltransferase from Yersinia enterocolitica serotype O:8 / biotype 1B (strain NCTC 13174 / 8081).